Here is a 153-residue protein sequence, read N- to C-terminus: Aspartate carbamoyltransferase regulatory chain (153 aa).

Zn(2+)-binding residues include Cys109, Cys114, Cys138, and Cys141.

This sequence belongs to the PyrI family. In terms of assembly, contains catalytic and regulatory chains. It depends on Zn(2+) as a cofactor.

Its function is as follows. Involved in allosteric regulation of aspartate carbamoyltransferase. This Salmonella newport (strain SL254) protein is Aspartate carbamoyltransferase regulatory chain.